A 127-amino-acid chain; its full sequence is Riboflavin kinase (127 aa).

10–15 (GLGEGK) is a CDP binding site. 2 residues coordinate Mg(2+): Thr-39 and Asn-41. 2 residues coordinate FMN: Thr-96 and Glu-104. 109–112 (IQLR) lines the CDP pocket.

It belongs to the archaeal riboflavin kinase family. Mg(2+) serves as cofactor.

The enzyme catalyses riboflavin + CTP = CDP + FMN + H(+). It participates in cofactor biosynthesis; FMN biosynthesis; FMN from riboflavin (CTP route): step 1/1. Functionally, catalyzes the CTP-dependent phosphorylation of riboflavin (vitamin B2) to form flavin mononucleotide (FMN). The chain is Riboflavin kinase from Methanococcus maripaludis (strain DSM 14266 / JCM 13030 / NBRC 101832 / S2 / LL).